The chain runs to 69 residues: MDNRLLEILVCPLCKGKLEYDRAAQELICHADKLAYPIRDGIPVMLADEARQTVPGRVVPVEPSAPAGN.

This sequence belongs to the UPF0434 family.

In Cupriavidus metallidurans (strain ATCC 43123 / DSM 2839 / NBRC 102507 / CH34) (Ralstonia metallidurans), this protein is UPF0434 protein Rmet_0534.